The primary structure comprises 273 residues: MHEAQIRVAIAGAGGRMGRQLIQAAMAMEGVQLGAALEREGSSLLGSDAGELAGGGKSGVIVQSSLEAVKDDFDVFIDFTRPEGTLTHLAFCRQHGKGMVIGTTGFDDAGKQAIREASQEIAIVFAANFSVGVNVMLKLLEKAAKVMGDYSDIEIIEAHHRHKVDAPSGTALAMGEAIAGALDKNLKDCAVYSREGYTGERVPGTIGFATVRAGDIVGEHTAMFADIGERVEITHKASSRMTFANGALRSALWLKTKKNGLFDMRDVLGLDVL.

NAD(+)-binding positions include 12 to 17 (GAGGRM) and Glu38. Residue Arg39 coordinates NADP(+). NAD(+) is bound by residues 102 to 104 (GTT) and 126 to 129 (AANF). His159 functions as the Proton donor/acceptor in the catalytic mechanism. Position 160 (His160) interacts with (S)-2,3,4,5-tetrahydrodipicolinate. Lys163 acts as the Proton donor in catalysis. 169-170 (GT) is a (S)-2,3,4,5-tetrahydrodipicolinate binding site.

It belongs to the DapB family. As to quaternary structure, homotetramer.

The protein localises to the cytoplasm. The enzyme catalyses (S)-2,3,4,5-tetrahydrodipicolinate + NAD(+) + H2O = (2S,4S)-4-hydroxy-2,3,4,5-tetrahydrodipicolinate + NADH + H(+). It carries out the reaction (S)-2,3,4,5-tetrahydrodipicolinate + NADP(+) + H2O = (2S,4S)-4-hydroxy-2,3,4,5-tetrahydrodipicolinate + NADPH + H(+). It participates in amino-acid biosynthesis; L-lysine biosynthesis via DAP pathway; (S)-tetrahydrodipicolinate from L-aspartate: step 4/4. In terms of biological role, catalyzes the conversion of 4-hydroxy-tetrahydrodipicolinate (HTPA) to tetrahydrodipicolinate. The protein is 4-hydroxy-tetrahydrodipicolinate reductase of Salmonella enteritidis PT4 (strain P125109).